Reading from the N-terminus, the 200-residue chain is ATP-dependent Clp protease proteolytic subunit 1 (200 aa).

S98 (nucleophile) is an active-site residue. H123 is a catalytic residue.

It belongs to the peptidase S14 family. Fourteen ClpP subunits assemble into 2 heptameric rings which stack back to back to give a disk-like structure with a central cavity, resembling the structure of eukaryotic proteasomes.

It is found in the cytoplasm. The enzyme catalyses Hydrolysis of proteins to small peptides in the presence of ATP and magnesium. alpha-casein is the usual test substrate. In the absence of ATP, only oligopeptides shorter than five residues are hydrolyzed (such as succinyl-Leu-Tyr-|-NHMec, and Leu-Tyr-Leu-|-Tyr-Trp, in which cleavage of the -Tyr-|-Leu- and -Tyr-|-Trp bonds also occurs).. In terms of biological role, cleaves peptides in various proteins in a process that requires ATP hydrolysis. Has a chymotrypsin-like activity. Plays a major role in the degradation of misfolded proteins. The sequence is that of ATP-dependent Clp protease proteolytic subunit 1 from Mycobacterium leprae (strain TN).